The following is a 931-amino-acid chain: Valine--tRNA ligase (931 aa).

The short motif at 43–53 (PNVTGALHIGH) is the 'HIGH' region element. The tract at residues 351 to 370 (IPHTDKDGNAHDAEPRTIQT) is disordered. The span at 353–365 (HTDKDGNAHDAEP) shows a compositional bias: basic and acidic residues. Positions 552–556 (KMSKS) match the 'KMSKS' region motif. Lysine 555 is a binding site for ATP. A disordered region spans residues 691–717 (LQGRGLGEGDEAVPAPADGPLSPALSP). The stretch at 864-930 (VIDIAAERER…DRLSAALARL (67 aa)) forms a coiled coil.

The protein belongs to the class-I aminoacyl-tRNA synthetase family. ValS type 1 subfamily. In terms of assembly, monomer.

It localises to the cytoplasm. It carries out the reaction tRNA(Val) + L-valine + ATP = L-valyl-tRNA(Val) + AMP + diphosphate. Functionally, catalyzes the attachment of valine to tRNA(Val). As ValRS can inadvertently accommodate and process structurally similar amino acids such as threonine, to avoid such errors, it has a 'posttransfer' editing activity that hydrolyzes mischarged Thr-tRNA(Val) in a tRNA-dependent manner. The chain is Valine--tRNA ligase from Sphingopyxis alaskensis (strain DSM 13593 / LMG 18877 / RB2256) (Sphingomonas alaskensis).